A 180-amino-acid polypeptide reads, in one-letter code: Superoxide dismutase [Cu-Zn] (180 aa).

An N-terminal signal peptide occupies residues 1–19 (MFMNLLSQVSNAIFPQVEA). Residues His68, His70, and His85 each coordinate Cu cation. A disulfide bridge connects residues Cys79 and Cys171. 4 residues coordinate Zn(2+): His85, His93, His102, and Asp105. Cu cation is bound at residue His142.

Belongs to the Cu-Zn superoxide dismutase family. As to quaternary structure, homodimer. Cu cation serves as cofactor. Zn(2+) is required as a cofactor.

The protein localises to the cytoplasm. It carries out the reaction 2 superoxide + 2 H(+) = H2O2 + O2. Functionally, destroys radicals which are normally produced within the cells and which are toxic to biological systems. Required for normal brood size. May be involved in regulating mpk-1 phosphorylation downstream of phosphatase ptp-2 during oocyte maturation. The protein is Superoxide dismutase [Cu-Zn] of Caenorhabditis briggsae.